A 191-amino-acid polypeptide reads, in one-letter code: Cell division protein SepF (191 aa).

Residues 156–167 show a composition bias toward polar residues; that stretch reads EEASPSNMSNKG. Residues 156–191 form a disordered region; the sequence is EEASPSNMSNKGNDLISKETSPAPEPAWGETVATAL.

The protein belongs to the SepF family. Homodimer. Interacts with FtsZ.

It is found in the cytoplasm. Cell division protein that is part of the divisome complex and is recruited early to the Z-ring. Probably stimulates Z-ring formation, perhaps through the cross-linking of FtsZ protofilaments. Its function overlaps with FtsA. In Prochlorococcus marinus (strain NATL1A), this protein is Cell division protein SepF.